Consider the following 95-residue polypeptide: FXYD domain-containing ion transport regulator 6 (95 aa).

An N-terminal signal peptide occupies residues 1–18 (MEVVLLFLCGLLAPAVLA). Residues 19 to 35 (SATEQEKEKDPFHYDYQ) lie on the Extracellular side of the membrane. A helical transmembrane segment spans residues 36–58 (TLRIGGLVFAVVLFSVGILLILS). Topologically, residues 59 to 95 (RRCKCSFNQKPRAPGDEEAQVENLVTANATEPQKAEN) are cytoplasmic. A disordered region spans residues 69-95 (PRAPGDEEAQVENLVTANATEPQKAEN).

This sequence belongs to the FXYD family. As to quaternary structure, regulatory subunit of the sodium/potassium-transporting ATPase which is composed of a catalytic alpha subunit, a non-catalytic beta subunit and an additional regulatory subunit. The regulatory subunit, a member of the FXYD protein family, modulates the enzymatic activity in a tissue- and isoform-specific way by changing affinities of the Na+/K+-ATPase toward Na(+), K(+) or ATP.

It localises to the cell membrane. Its function is as follows. Associates with and regulates the activity of the sodium/potassium-transporting ATPase (NKA) which catalyzes the hydrolysis of ATP coupled with the exchange of Na(+) and K(+) ions across the plasma membrane. Reduces the apparent affinity for intracellular Na(+) with no change in the apparent affinity for extracellular K(+). In addition to modulating NKA kinetics, may also function as a regulator of NKA localization to the plasma membrane. This Bos taurus (Bovine) protein is FXYD domain-containing ion transport regulator 6 (FXYD6).